The chain runs to 20 residues: Kassinatuerin-2 (20 aa).

Position 20 is an isoleucine amide (Ile-20).

Expressed by the skin dorsal glands.

The protein localises to the secreted. In terms of biological role, has no antimicrobial activities against bacteria (E.coli and S.aureus) nor against the fungus C.albicans. The chain is Kassinatuerin-2 from Kassina senegalensis (Senegal running frog).